The following is a 920-amino-acid chain: 2-oxoadipate dehydrogenase complex component E1 (920 aa).

The interval 299–322 is disordered; sequence QGKTRGRQQVKQDGDYSTDPHSRP. Residues 308 to 322 are compositionally biased toward basic and acidic residues; the sequence is VKQDGDYSTDPHSRP.

Belongs to the alpha-ketoglutarate dehydrogenase family. The 2-oxoadipate dehydrogenase complex is composed of OADH (2-oxoadipate dehydrogenase; E1a), DLST (dihydrolipoamide succinyltransferase; E2) and DLD (dihydrolipoamide dehydrogenase; E3). E1a functional unit is a dimer. Thiamine diphosphate serves as cofactor.

Its subcellular location is the mitochondrion. It carries out the reaction N(6)-[(R)-lipoyl]-L-lysyl-[protein] + 2-oxoadipate + H(+) = N(6)-[(R)-S(8)-glutaryldihydrolipoyl]-L-lysyl-[protein] + CO2. It functions in the pathway amino-acid degradation. Its function is as follows. 2-oxoadipate dehydrogenase (E1a) component of the 2-oxoadipate dehydrogenase complex (OADHC). Participates in the first step, rate limiting for the overall conversion of 2-oxoadipate (alpha-ketoadipate) to glutaryl-CoA and CO(2) catalyzed by the whole OADHC. Catalyzes the irreversible decarboxylation of 2-oxoadipate via the thiamine diphosphate (ThDP) cofactor and subsequent transfer of the decarboxylated acyl intermediate on an oxidized dihydrolipoyl group that is covalently amidated to the E2 enzyme (dihydrolipoyllysine-residue succinyltransferase or DLST). Can catalyze the decarboxylation of 2-oxoglutarate in vitro, but at a much lower rate than 2-oxoadipate. Responsible for the last step of L-lysine, L-hydroxylysine and L-tryptophan catabolism with the common product being 2-oxoadipate. The sequence is that of 2-oxoadipate dehydrogenase complex component E1 (dhtkd1) from Danio rerio (Zebrafish).